A 941-amino-acid chain; its full sequence is MPMPTVSMSPALTALIERAVARVRQSLPVEQAWPGGEFDRQLAQVALASEFALDTLARQPALLQHLAQPDPPPLPLPQFDPAQPQLWPAQLRRYRSAESTRLVWRDVLGLDSVEATLAGATQLAEHCLQCGLQALEQQFHTRHGKVVAADGSVQRLVVFGLGKLGGGELNFSSDVDLVYAYPQGGQSDGARPLAAEEYFARLGQQLARLLDETTADGFSHRVDLRLRPFGTAGRVALSFAGMDQYFQREGRDWERYAWLKARAVAGDIDAGEAWLETLRPFVYRRYLDFTALDGLREMKAAITAEVARHDRLDDIKRGPGGIREIEFLAQSLQLIRGGREPSLRERRLLPALQALVAAGQIDQENGQALSTAYRFLRRLENRLQMLRDAQTHALPQAPLDRERIALGLGYAQWSALLDALAPQRARVAAEFAELLAPRVRATAPDALADYWRALPDGDAAPLAGIGLNDPDGAHRALADFAQSSGVRALSDSARARLDRVMPALLHAATRASQPDAAVRRMLGLLQATLRRTSYLALLDEQPSALARLVDVLSRSALLAERLAAYPLLLDELLDTRISGPLPDRAALHAACAHTLHIDDTEAALRELNERRLALSFRIALATLDGRQQAVESTRQLAWLAEAVVQTVLHLARSDMLAAHGHVPGGSFAIVGYGSLGGLELGFGSDLDLVFLYDHPREVDASDGKRPLDAGRWFARLAQKVMALLAAETGAGRLYDIDVRLRPDGGKGALVSSLASYREYQRDRAWTWEHQALVRARAVAGDAALCDAFAQVRRDTLMRVRDTAQLHEDVRKMRARMRAELDRSDAGRLDLKQGAGGLVDLEFVLQAGVLGLAAQQPQLLDACDTPALIDALARTHWLPDESAAPLHQAHATLVDAGLSCTLDRRPRLIAPTPAIQQARGIIFNAARGQGLTFPLGKDETAL.

Residues 1–437 (MPMPTVSMSP…AAEFAELLAP (437 aa)) are adenylyl removase. An adenylyl transferase region spans residues 444-941 (PDALADYWRA…FPLGKDETAL (498 aa)).

It belongs to the GlnE family. The cofactor is Mg(2+).

The catalysed reaction is [glutamine synthetase]-O(4)-(5'-adenylyl)-L-tyrosine + phosphate = [glutamine synthetase]-L-tyrosine + ADP. It catalyses the reaction [glutamine synthetase]-L-tyrosine + ATP = [glutamine synthetase]-O(4)-(5'-adenylyl)-L-tyrosine + diphosphate. Functionally, involved in the regulation of glutamine synthetase GlnA, a key enzyme in the process to assimilate ammonia. When cellular nitrogen levels are high, the C-terminal adenylyl transferase (AT) inactivates GlnA by covalent transfer of an adenylyl group from ATP to specific tyrosine residue of GlnA, thus reducing its activity. Conversely, when nitrogen levels are low, the N-terminal adenylyl removase (AR) activates GlnA by removing the adenylyl group by phosphorolysis, increasing its activity. The regulatory region of GlnE binds the signal transduction protein PII (GlnB) which indicates the nitrogen status of the cell. This Xanthomonas axonopodis pv. citri (strain 306) protein is Bifunctional glutamine synthetase adenylyltransferase/adenylyl-removing enzyme.